We begin with the raw amino-acid sequence, 562 residues long: Arginine--tRNA ligase (562 aa).

A 'HIGH' region motif is present at residues 121 to 131; it reads PNIAKPFSVGH.

It belongs to the class-I aminoacyl-tRNA synthetase family. As to quaternary structure, monomer.

It is found in the cytoplasm. The catalysed reaction is tRNA(Arg) + L-arginine + ATP = L-arginyl-tRNA(Arg) + AMP + diphosphate. The chain is Arginine--tRNA ligase from Streptococcus uberis (strain ATCC BAA-854 / 0140J).